The chain runs to 611 residues: MGIVLEPPCPKSVDGISIDPEPNWNFESLVAEIASVEKKLNGFSMYPQPITNTTLRMGRRGGGFVMHVSEDEMESDEGEESDDEEEEEDHSQICTAGKRFACDELYLSDESDEEFDHEPEYMMNKLGLAESALYEVINDHQTEIKDDIRNQVSVVETEIMNEIETSLSAIARVEKYSETRKEVERKLDLQYQRKVAEALDTHLTAVQREHKIKSQIEERKIRSEEAQEEARRKERAHQEEKIRQEKARAEAQMLAKIRAEEEKKEVERKAAREVAEKEVADRKAAEQKLAEQKAVIESVTGSSATSNAQAGGNSIRAAESALILENHRLKKLEELETTNQSLKSRSNENFSSFEKHIGRVIRQISGTKDSVSGKINDIVKIFKDPRCPVSISIAAFAKKMVTTKEKPNPFACSYVIVYINSQFPQVMDILLAEFHKACIYTVPKHIVNSQSAWDSDAYERLDSIMRLYGALVQTDIRVGNATNVHGIEHGWAWLARFLNKIPANRATATALNSFLQTAGFGLHQRYKSQFLKVVNVVREHFLQKLRAKKDTSDLLVIIAEITAYLDDRMYLKEPEGRAMKTTSTLSSELTAELNQPNYNQNYQRNDYRNYY.

2 disordered regions span residues 69-94 and 220-243; these read SEDEMESDEGEESDDEEEEEDHSQIC and KIRSEEAQEEARRKERAHQEEKIR. A compositionally biased stretch (acidic residues) spans 71 to 89; it reads DEMESDEGEESDDEEEEED.

This sequence belongs to the GLE1 family. In terms of assembly, part of the nuclear pore complex (NPC). The NPC has an eight-fold symmetrical structure comprising a central transport channel and two rings, the cytoplasmic and nuclear rings, to which eight filaments are attached. The cytoplasmic filaments have loose ends, while the nuclear filaments are joined in a distal ring, forming a nuclear basket. NPCs are highly dynamic in configuration and composition, and can be devided in 3 subcomplexes, the NUP62 subcomplex, the NUP107-160 subcomplex and the NUP93 subcomplex, containing approximately 30 different nucleoporin proteins.

It is found in the nucleus envelope. It localises to the nucleus. The protein localises to the nuclear pore complex. Required for seed viability. The sequence is that of mRNA export factor GLE1 from Arabidopsis thaliana (Mouse-ear cress).